A 356-amino-acid polypeptide reads, in one-letter code: Nicotinate-nucleotide--dimethylbenzimidazole phosphoribosyltransferase (356 aa).

Catalysis depends on glutamate 317, which acts as the Proton acceptor.

This sequence belongs to the CobT family. In terms of assembly, homodimer.

The catalysed reaction is 5,6-dimethylbenzimidazole + nicotinate beta-D-ribonucleotide = alpha-ribazole 5'-phosphate + nicotinate + H(+). It participates in nucleoside biosynthesis; alpha-ribazole biosynthesis; alpha-ribazole from 5,6-dimethylbenzimidazole: step 1/2. Functionally, catalyzes the synthesis of alpha-ribazole-5'-phosphate from nicotinate mononucleotide (NAMN) and 5,6-dimethylbenzimidazole (DMB). The chain is Nicotinate-nucleotide--dimethylbenzimidazole phosphoribosyltransferase from Salmonella dublin (strain CT_02021853).